The primary structure comprises 545 residues: Glucose-6-phosphate isomerase (545 aa).

The Proton donor role is filled by Glu343. Residues His374 and Lys513 contribute to the active site.

The protein belongs to the GPI family.

It is found in the cytoplasm. The catalysed reaction is alpha-D-glucose 6-phosphate = beta-D-fructose 6-phosphate. The protein operates within carbohydrate biosynthesis; gluconeogenesis. Its pathway is carbohydrate degradation; glycolysis; D-glyceraldehyde 3-phosphate and glycerone phosphate from D-glucose: step 2/4. Catalyzes the reversible isomerization of glucose-6-phosphate to fructose-6-phosphate. This Methylibium petroleiphilum (strain ATCC BAA-1232 / LMG 22953 / PM1) protein is Glucose-6-phosphate isomerase.